Here is a 442-residue protein sequence, read N- to C-terminus: UDP-N-acetylmuramoylalanine--D-glutamate ligase (442 aa).

Residue 115 to 121 (GSNGKST) participates in ATP binding.

It belongs to the MurCDEF family.

The protein localises to the cytoplasm. The catalysed reaction is UDP-N-acetyl-alpha-D-muramoyl-L-alanine + D-glutamate + ATP = UDP-N-acetyl-alpha-D-muramoyl-L-alanyl-D-glutamate + ADP + phosphate + H(+). It functions in the pathway cell wall biogenesis; peptidoglycan biosynthesis. In terms of biological role, cell wall formation. Catalyzes the addition of glutamate to the nucleotide precursor UDP-N-acetylmuramoyl-L-alanine (UMA). This Aliivibrio salmonicida (strain LFI1238) (Vibrio salmonicida (strain LFI1238)) protein is UDP-N-acetylmuramoylalanine--D-glutamate ligase.